The sequence spans 144 residues: Large ribosomal subunit protein uL15 (144 aa).

The interval 1–51 (MRLNTIKPGAGSKSAGKRVGRGIGSGLGKTCGRGHKGQKSRAGGFHKVGFE) is disordered. Gly residues predominate over residues 21 to 31 (RGIGSGLGKTC).

It belongs to the universal ribosomal protein uL15 family. As to quaternary structure, part of the 50S ribosomal subunit.

In terms of biological role, binds to the 23S rRNA. This chain is Large ribosomal subunit protein uL15, found in Azoarcus sp. (strain BH72).